The chain runs to 179 residues: Adenine phosphoribosyltransferase (179 aa).

This sequence belongs to the purine/pyrimidine phosphoribosyltransferase family. In terms of assembly, homodimer.

Its subcellular location is the cytoplasm. It carries out the reaction AMP + diphosphate = 5-phospho-alpha-D-ribose 1-diphosphate + adenine. It functions in the pathway purine metabolism; AMP biosynthesis via salvage pathway; AMP from adenine: step 1/1. Catalyzes a salvage reaction resulting in the formation of AMP, that is energically less costly than de novo synthesis. The sequence is that of Adenine phosphoribosyltransferase from Mycolicibacterium gilvum (strain PYR-GCK) (Mycobacterium gilvum (strain PYR-GCK)).